Reading from the N-terminus, the 359-residue chain is Alanine racemase (359 aa).

The Proton acceptor; specific for D-alanine role is filled by lysine 35. Position 35 is an N6-(pyridoxal phosphate)lysine (lysine 35). Arginine 130 lines the substrate pocket. Tyrosine 255 functions as the Proton acceptor; specific for L-alanine in the catalytic mechanism. Residue methionine 303 participates in substrate binding.

This sequence belongs to the alanine racemase family. Pyridoxal 5'-phosphate serves as cofactor.

The enzyme catalyses L-alanine = D-alanine. It functions in the pathway amino-acid biosynthesis; D-alanine biosynthesis; D-alanine from L-alanine: step 1/1. In terms of biological role, catalyzes the interconversion of L-alanine and D-alanine. May also act on other amino acids. The chain is Alanine racemase (alr) from Janthinobacterium sp. (strain Marseille) (Minibacterium massiliensis).